The following is a 325-amino-acid chain: Biotin synthase (325 aa).

Residues 46–270 enclose the Radical SAM core domain; the sequence is NNSNNIDLCS…IAICKLILPN (225 aa). Residues C64, C68, and C71 each contribute to the [4Fe-4S] cluster site. [2Fe-2S] cluster-binding residues include S107, C139, C198, and R274.

The protein belongs to the radical SAM superfamily. Biotin synthase family. In terms of assembly, homodimer. [4Fe-4S] cluster is required as a cofactor. Requires [2Fe-2S] cluster as cofactor.

It carries out the reaction (4R,5S)-dethiobiotin + (sulfur carrier)-SH + 2 reduced [2Fe-2S]-[ferredoxin] + 2 S-adenosyl-L-methionine = (sulfur carrier)-H + biotin + 2 5'-deoxyadenosine + 2 L-methionine + 2 oxidized [2Fe-2S]-[ferredoxin]. The protein operates within cofactor biosynthesis; biotin biosynthesis; biotin from 7,8-diaminononanoate: step 2/2. Catalyzes the conversion of dethiobiotin (DTB) to biotin by the insertion of a sulfur atom into dethiobiotin via a radical-based mechanism. This Methanococcus aeolicus (strain ATCC BAA-1280 / DSM 17508 / OCM 812 / Nankai-3) protein is Biotin synthase.